The sequence spans 414 residues: Serine--tRNA ligase (414 aa).

230-232 (TSE) provides a ligand contact to L-serine. ATP is bound at residue 261-263 (RQE). Glu284 is an L-serine binding site. Residue 348–351 (EISS) coordinates ATP. Residue Ser382 participates in L-serine binding.

Belongs to the class-II aminoacyl-tRNA synthetase family. Type-1 seryl-tRNA synthetase subfamily. Homodimer. The tRNA molecule binds across the dimer.

The protein resides in the cytoplasm. The enzyme catalyses tRNA(Ser) + L-serine + ATP = L-seryl-tRNA(Ser) + AMP + diphosphate + H(+). It catalyses the reaction tRNA(Sec) + L-serine + ATP = L-seryl-tRNA(Sec) + AMP + diphosphate + H(+). It functions in the pathway aminoacyl-tRNA biosynthesis; selenocysteinyl-tRNA(Sec) biosynthesis; L-seryl-tRNA(Sec) from L-serine and tRNA(Sec): step 1/1. Its function is as follows. Catalyzes the attachment of serine to tRNA(Ser). Is also able to aminoacylate tRNA(Sec) with serine, to form the misacylated tRNA L-seryl-tRNA(Sec), which will be further converted into selenocysteinyl-tRNA(Sec). This Campylobacter fetus subsp. fetus (strain 82-40) protein is Serine--tRNA ligase.